The primary structure comprises 144 residues: MKIQVINKSKHALPEYATGQSAGMDIRANLDEPIVLKPLQRCLVPTGLYIALPEGFEAQIRPRSGLAIKKGIGVLNSPGTIDADYRGEICIILVNLSSEDFMIEDGERIAQMVVARHEHAEWQEVEVLDETERGAGGFGHTGKK.

Substrate contacts are provided by residues 63-65, N76, and 80-82; these read RSG and TID.

This sequence belongs to the dUTPase family. Mg(2+) is required as a cofactor.

It carries out the reaction dUTP + H2O = dUMP + diphosphate + H(+). Its pathway is pyrimidine metabolism; dUMP biosynthesis; dUMP from dCTP (dUTP route): step 2/2. This enzyme is involved in nucleotide metabolism: it produces dUMP, the immediate precursor of thymidine nucleotides and it decreases the intracellular concentration of dUTP so that uracil cannot be incorporated into DNA. The chain is Deoxyuridine 5'-triphosphate nucleotidohydrolase from Phocaeicola vulgatus (strain ATCC 8482 / DSM 1447 / JCM 5826 / CCUG 4940 / NBRC 14291 / NCTC 11154) (Bacteroides vulgatus).